We begin with the raw amino-acid sequence, 429 residues long: Histidine--tRNA ligase (429 aa).

It belongs to the class-II aminoacyl-tRNA synthetase family. Homodimer.

It is found in the cytoplasm. It catalyses the reaction tRNA(His) + L-histidine + ATP = L-histidyl-tRNA(His) + AMP + diphosphate + H(+). The sequence is that of Histidine--tRNA ligase from Streptococcus pneumoniae (strain Hungary19A-6).